Reading from the N-terminus, the 311-residue chain is Protoheme IX farnesyltransferase (311 aa).

The next 8 membrane-spanning stretches (helical) occupy residues 30–50 (VVQL…PGWP), 55–75 (WGVA…AAAF), 108–128 (FAVL…NALT), 129–149 (MWLT…LLKP), 153–173 (QNIV…WAAM), 182–202 (WILC…LALY), 233–253 (FVLF…WFYL), and 287–307 (IWHL…GPLL).

It belongs to the UbiA prenyltransferase family. Protoheme IX farnesyltransferase subfamily.

It localises to the cell inner membrane. It carries out the reaction heme b + (2E,6E)-farnesyl diphosphate + H2O = Fe(II)-heme o + diphosphate. It functions in the pathway porphyrin-containing compound metabolism; heme O biosynthesis; heme O from protoheme: step 1/1. Converts heme B (protoheme IX) to heme O by substitution of the vinyl group on carbon 2 of heme B porphyrin ring with a hydroxyethyl farnesyl side group. The polypeptide is Protoheme IX farnesyltransferase (Methylibium petroleiphilum (strain ATCC BAA-1232 / LMG 22953 / PM1)).